A 472-amino-acid polypeptide reads, in one-letter code: MALVARSICVSYDEIAGICNNVSHRNFKKWVQWKNPFLFQDDARRNIRFNDRKLSCTKFIGASEKLQHSKSPKSGLISCGWEVNSSKVVSNAVIPKKWNLLKLKVVEVTAIVACTFFVMSSAQAVDALKTCTCLLKECRIELAKCIANPSCAANVACLQTCNNRPDETECQIKCGDLFANKVVDEFNECAVSRKKCVPQKSDVGEFPVPDPSVLVKSFNMADFNGKWFISSGLNPTFDAFDCQLHEFHLEDGKLVGNLSWRIKTPDGGFFTRTAVQKFAQDPSQPGMLYNHDNAYLHYQDDWYILSSKIENQPDDYVFVYYRGRNDAWDGYGGAFLYTRSATVPENIVPELNRAAQSVGKDFNKFIRTDNTCGPEPPLVERLEKTVEEGERTIIKEVEQLEGEIEGDLEKVGKTEMTLFQRLLEGFQELQKDEEYFLKELNKEERELLEDLKMEAGEVEKLFGRALPIRKLR.

6 disulfide bridges follow: C133–C151, C138–C145, C157–C174, C161–C170, C189–C196, and C242–C372. A coiled-coil region spans residues 379–462; it reads VERLEKTVEE…MEAGEVEKLF (84 aa).

Belongs to the calycin superfamily. Lipocalin family. Post-translationally, disulfide bonds. Reduction of the disulfides results in loss of a rigid structure, a decrease in thermal stability of 15 degrees Celsius and a loss of activity.

Its subcellular location is the plastid. The protein localises to the chloroplast thylakoid membrane. It carries out the reaction all-trans-violaxanthin + 2 L-ascorbate = all-trans-zeaxanthin + 2 L-dehydroascorbate + 2 H2O. Its activity is regulated as follows. Irreversibly inhibited by DTT and iodoacetamide at pH 5.7 or pH 5.2, but not at pH 7.2. Regulated through Ca(2+) gating of H(+) flux at the CFoH(+) channel. Requires the presence of lipids forming reverse hexagonal structures such as monogalactosyldiacylglyceride (MGDG) or phosphatidylethanolamine. A negative curvature elastic stress in the thylakoid lipid bilayer is required for VDE1 activity. In terms of biological role, part of the xanthophyll (or violaxanthin) cycle for controlling the concentration of zeaxanthin in chloroplasts. Catalyzes the two-step mono de-epoxidation reaction. Stereospecific for all-trans xanthophylls. Zeaxanthin induces the dissipation of excitation energy in the chlorophyll of the light-harvesting protein complex of photosystem II. The polypeptide is Violaxanthin de-epoxidase, chloroplastic (Spinacia oleracea (Spinach)).